Reading from the N-terminus, the 88-residue chain is MSLLDYFRSNKKQNTAQLAKERLQIIVAHERSSRGGPDYLPQLKQDLLDVIRKYVQIDPDKITVQLDKKSDELSVLELNITFADDKKG.

Belongs to the MinE family.

Prevents the cell division inhibition by proteins MinC and MinD at internal division sites while permitting inhibition at polar sites. This ensures cell division at the proper site by restricting the formation of a division septum at the midpoint of the long axis of the cell. In Aeromonas salmonicida (strain A449), this protein is Cell division topological specificity factor.